The chain runs to 336 residues: MSASIIAIDAMGGDFGPHCIVPACISALAEFPSLHLALVGQAPLIEEQLARQSGVDRSRLQVHHASEVIAMDERPAQALRGKPDASMRVALELVRQRQAHACVSAGNTGALMALSRYVLKTLPGIDRPAMVSPIPTERGHCYLLDLGANVDCSAEHLYQFAIMGAVAAETLGVARPRVALLNVGTEDIKGNQQVKLAASLLLQARGLNFIGYIEGDGVYRGEADVVVCDGFVGNILLKASEGLAKMITGRVETLFNEGLFAQAVGALAMPLLRRLKADLAPARHNGASFLGLQGIVVKSHGAAGQESFQSAIRCALREVQENLPQRLHGRLEDLLL.

It belongs to the PlsX family. In terms of assembly, homodimer. Probably interacts with PlsY.

It is found in the cytoplasm. The enzyme catalyses a fatty acyl-[ACP] + phosphate = an acyl phosphate + holo-[ACP]. It participates in lipid metabolism; phospholipid metabolism. In terms of biological role, catalyzes the reversible formation of acyl-phosphate (acyl-PO(4)) from acyl-[acyl-carrier-protein] (acyl-ACP). This enzyme utilizes acyl-ACP as fatty acyl donor, but not acyl-CoA. The chain is Phosphate acyltransferase from Ectopseudomonas mendocina (strain ymp) (Pseudomonas mendocina).